The sequence spans 691 residues: NADPH--cytochrome P450 reductase (691 aa).

At 2-7 (PFGIDN) the chain is on the lumenal side. Residues 8–24 (TDFTVLAGLVLAVLLYV) traverse the membrane as a helical segment. At 25–691 (KRNSIKELLM…TSGRYQEDVW (667 aa)) the chain is on the cytoplasmic side. One can recognise a Flavodoxin-like domain in the interval 61-204 (YLVLYASQTG…DYMAWKDSIL (144 aa)). FMN-binding positions include 67–72 (SQTGTA), Lys78, 116–119 (STYG), 152–161 (LGNSTYEFFN), and Asp187. The FAD-binding FR-type domain occupies 266-529 (SQPYIAPIVK…HVRRSNFRLP (264 aa)). Arg285 is a binding site for NADP(+). FAD is bound by residues 439–442 (RYYS), 457–459 (TSI), and 476–479 (GVTT). Residues Thr543, 610 to 611 (SR), 617 to 621 (KVYVQ), and Asp646 each bind NADP(+). A Glycyl lysine isopeptide (Lys-Gly) (interchain with G-Cter in ubiquitin) cross-link involves residue Lys666. Trp691 is an FAD binding site.

It belongs to the NADPH--cytochrome P450 reductase family. This sequence in the N-terminal section; belongs to the flavodoxin family. The protein in the C-terminal section; belongs to the flavoprotein pyridine nucleotide cytochrome reductase family. In terms of assembly, interacts with PCL1. Requires FAD as cofactor. FMN serves as cofactor. Phosphorylated by the cyclin-CDK PCL1-PHO85.

The protein resides in the endoplasmic reticulum membrane. It localises to the mitochondrion outer membrane. It is found in the cell membrane. It carries out the reaction 2 oxidized [cytochrome P450] + NADPH = 2 reduced [cytochrome P450] + NADP(+) + H(+). Functionally, this enzyme is required for electron transfer from NADP to cytochrome P450 in microsomes. It can also provide electron transfer to heme oxygenase and cytochrome B5. Involved in ergosterol biosynthesis. Has NADPH-dependent ferrireductase activity on the plasma membrane. The protein is NADPH--cytochrome P450 reductase of Saccharomyces cerevisiae (strain ATCC 204508 / S288c) (Baker's yeast).